A 266-amino-acid polypeptide reads, in one-letter code: 3-methyl-2-oxobutanoate hydroxymethyltransferase (266 aa).

Mg(2+) contacts are provided by D46 and D85. Residues 46 to 47, D85, and K115 contribute to the 3-methyl-2-oxobutanoate site; that span reads DS. Residue E117 participates in Mg(2+) binding. Residue E183 is the Proton acceptor of the active site.

The protein belongs to the PanB family. In terms of assembly, homodecamer; pentamer of dimers. Mg(2+) serves as cofactor.

Its subcellular location is the cytoplasm. It catalyses the reaction 3-methyl-2-oxobutanoate + (6R)-5,10-methylene-5,6,7,8-tetrahydrofolate + H2O = 2-dehydropantoate + (6S)-5,6,7,8-tetrahydrofolate. It participates in cofactor biosynthesis; (R)-pantothenate biosynthesis; (R)-pantoate from 3-methyl-2-oxobutanoate: step 1/2. Functionally, catalyzes the reversible reaction in which hydroxymethyl group from 5,10-methylenetetrahydrofolate is transferred onto alpha-ketoisovalerate to form ketopantoate. This Trichlorobacter lovleyi (strain ATCC BAA-1151 / DSM 17278 / SZ) (Geobacter lovleyi) protein is 3-methyl-2-oxobutanoate hydroxymethyltransferase.